We begin with the raw amino-acid sequence, 72 residues long: VKRPMNAFMVWSQHERRKIMDQWPDMHNAEISKRLGRRWELLQDSEKIPFVKEADGLLLKHMADYPNYKYRP.

The HMG box DNA-binding region spans Val-1 to Lys-69.

It localises to the nucleus. The polypeptide is SRY-related protein ADW4 (Alligator mississippiensis (American alligator)).